A 334-amino-acid polypeptide reads, in one-letter code: Glucokinase-like protein PD_0680 (334 aa).

18–23 (ADVGGT) is an ATP binding site.

The protein belongs to the bacterial glucokinase family.

In Xylella fastidiosa (strain Temecula1 / ATCC 700964), this protein is Glucokinase-like protein PD_0680.